A 664-amino-acid polypeptide reads, in one-letter code: Metal-nicotianamine transporter YSL2 (664 aa).

The next 14 helical transmembrane spans lie at 31 to 51, 55 to 75, 103 to 123, 147 to 167, 209 to 229, 268 to 288, 314 to 334, 378 to 398, 409 to 429, 457 to 477, 496 to 516, 549 to 569, 594 to 614, and 629 to 649; these read ITVR…VICL, LTTG…FVFL, CAVA…LLGL, GVGW…VVLV, GFIK…FYSG, LVNL…WPLI, FICI…ILFF, IPLW…IIAI, FVLV…YGAG, VVAG…SADL, VAQA…FFLF, SALP…AVAA, FLVG…VYVW, and VASG…LLAL.

It belongs to the YSL (TC 2.A.67.2) family. In terms of tissue distribution, expressed in roots, leaves and weakly in shoots. Restricted to the veins, to the central cylinder of the young roots and to the pericycle and the endodermis cells facing the meta-xylem tubes in older roots. Expressed in the vasculature of sepals, petals, anthers, stigma and siliques, but not in developing seeds or in meristematic zones.

The protein resides in the cell membrane. May be involved in the lateral transport of nicotianamine-chelated metals in the vasculature. In Arabidopsis thaliana (Mouse-ear cress), this protein is Metal-nicotianamine transporter YSL2 (YSL2).